A 145-amino-acid polypeptide reads, in one-letter code: MAEVEQKKKRTFKKFTYRGVDLDQLLDMSYEQVMQLYCARQRRRLNRGLRRKQNSLLKRLRKAKKEAPPMEKPEVIKTHLRDMIILPEMVGSMVGVYNGKAFNQVEIKPEMIGHYLGEFSITYKPVKHGRPGIGATHSSRFIPLK.

Belongs to the universal ribosomal protein uS19 family. As to quaternary structure, component of the small ribosomal subunit.

It localises to the cytoplasm. Component of the small ribosomal subunit. The ribosome is a large ribonucleoprotein complex responsible for the synthesis of proteins in the cell. The chain is Small ribosomal subunit protein uS19 (rps15) from Xenopus laevis (African clawed frog).